The primary structure comprises 314 residues: Putative methylthioribose-1-phosphate isomerase (314 aa).

Substrate is bound by residues 45–47 (RGA), R79, and Q177. D218 acts as the Proton donor in catalysis. Substrate is bound at residue 227-228 (NK).

It belongs to the eIF-2B alpha/beta/delta subunits family. MtnA subfamily.

The enzyme catalyses 5-(methylsulfanyl)-alpha-D-ribose 1-phosphate = 5-(methylsulfanyl)-D-ribulose 1-phosphate. Functionally, catalyzes the interconversion of methylthioribose-1-phosphate (MTR-1-P) into methylthioribulose-1-phosphate (MTRu-1-P). This is Putative methylthioribose-1-phosphate isomerase from Methanosphaera stadtmanae (strain ATCC 43021 / DSM 3091 / JCM 11832 / MCB-3).